Here is a 555-residue protein sequence, read N- to C-terminus: Probable portal protein (555 aa).

Belongs to the podoviridae head-to-tail connector protein family. Homododecamer.

The protein localises to the virion. Forms the portal vertex of the capsid. This portal plays critical roles in head assembly, genome packaging, neck/tail attachment, and genome ejection. The portal protein multimerizes as a single ring-shaped homododecamer arranged around a central channel. This is Probable portal protein from Bordetella bronchiseptica (Alcaligenes bronchisepticus).